The primary structure comprises 785 residues: MLGRMASAQDLLILALCGLLLELPAGYHATDTRQPRLRLSHKELWDLNRTSVFHSPFGYLGLHIMLLDEYQERLFVGGRDLLYSLSLDRISNNYREIHWPSTPLQAEECIIKGRDADECANYVRVLHRYNRTHLLACGTGAFDPVCTFIRVGHPSEDHLFQLESHKFERGRGRCPFDPTSSFTSILIGGELFTGLYSDYWGRDAAVFRTMNRMAHLRTEPDSEHLLKEPKFVGSYMIPDNEDHDDNKVYLFFTEKALEAETSTHAIYTRVGRVCVNDMGGQRIVVNKWSTFLKTRLVCSVPGRNGIDTHFDELEDVFLLQTRDNKNPVIFGLFSTTSNIFRGYAICVYHMAIVRAAFNGPYAHKEGPEYYWALYEGKVPYPRPGSCASKVNGGLYTTTKDYPDEAVHFARSHPLMYQPIKPVHKRPILVKTDGKYNLKQIAVDRVEAEDGQYDVLFIGTDNGIVLKVITIYNQETESMEEVILEELQVFKVPIPILSMEISSKRQQLYIGTESVIAQVKFHQCDMYGTACADCCLARDPYCAWDGISCSRYYPTGMQAKRRFRRQDVRHGNAAQQCFGQQFIGEVLEKTEERLVYGIEYNSTLLEYTPRTLQAKVNWFVQRAHETKKEEVKTDERIIKMDLGLLFLKLHRLDAGTYFCQTVEHSIVHTVRKITLEIVEEERVDEMFSKDYEEEISHKMPCPMQSNIPQVSKPWYKEFLQLIGYSNFQRVEEYCEKVWCTDKKRKKLKMSPSKWKYANPQEKRQDQEKKARIRPEHYRLPRNIADS.

The first 25 residues, 1–25, serve as a signal peptide directing secretion; it reads MLGRMASAQDLLILALCGLLLELPA. Residues 36–520 form the Sema domain; it reads RLRLSHKELW…TESVIAQVKF (485 aa). Asn-48 carries an N-linked (GlcNAc...) asparagine glycan. Cys-109 and Cys-119 are joined by a disulfide. Residue Asn-130 is glycosylated (N-linked (GlcNAc...) asparagine). Cystine bridges form between Cys-137-Cys-146, Cys-274-Cys-386, Cys-298-Cys-346, and Cys-523-Cys-541. N-linked (GlcNAc...) asparagine glycosylation occurs at Asn-600. An Ig-like C2-type domain is found at 651–740; that stretch reads LDAGTYFCQT…EYCEKVWCTD (90 aa). Cysteines 658 and 733 form a disulfide. A disordered region spans residues 744–785; it reads KKLKMSPSKWKYANPQEKRQDQEKKARIRPEHYRLPRNIADS. Residues 759-777 are compositionally biased toward basic and acidic residues; sequence QEKRQDQEKKARIRPEHYR.

It belongs to the semaphorin family. In terms of tissue distribution, collapsin-1, -2, -3, and -5 bind to overlapping but distinct axon tracts.

It localises to the secreted. Functionally, plays an important role in signaling via the cell surface receptor PLXND1. Mediates reorganization of the actin cytoskeleton, leading to the retraction of cell projections. Promotes focal adhesion disassembly and inhibits adhesion of endothelial cells to the extracellular matrix. Regulates angiogenesis. Can down-regulate sprouting angiogenesis. Required for normal vascular patterning during embryogenesis. Induces the collapse and paralysis of neuronal growth cones. Plays an important role in ensuring the specificity of synapse formation. The polypeptide is Semaphorin-3E (SEMA3E) (Gallus gallus (Chicken)).